Consider the following 523-residue polypeptide: UDP-glucuronosyltransferase 3A2 (523 aa).

A signal peptide spans 1-22 (MAAHRRWLLMSFLFLEVILLEA). Residues 23–487 (AKILTISTLS…QPWHEQYMLD (465 aa)) lie on the Extracellular side of the membrane. Residue Asn52 is glycosylated (N-linked (GlcNAc...) asparagine). The helical transmembrane segment at 488 to 508 (VFLFLLGLMLGTLWLSVKVLV) threads the bilayer. The Cytoplasmic portion of the chain corresponds to 509–523 (AVTRYLSIATKVKEA).

This sequence belongs to the UDP-glycosyltransferase family. As to expression, highly expressed in kidney, while it is expressed at low levels in liver. Not detected in other tissues examined.

The protein localises to the membrane. It catalyses the reaction glucuronate acceptor + UDP-alpha-D-glucuronate = acceptor beta-D-glucuronoside + UDP + H(+). Its function is as follows. UDP-glucuronosyltransferases catalyze phase II biotransformation reactions in which lipophilic substrates are conjugated with glucuronic acid to increase water solubility and enhance excretion. They are of major importance in the conjugation and subsequent elimination of potentially toxic xenobiotics and endogenous compounds. The protein is UDP-glucuronosyltransferase 3A2 (Ugt3a2) of Mus musculus (Mouse).